A 74-amino-acid chain; its full sequence is Translation initiation factor IF-1 (74 aa).

In terms of domain architecture, S1-like spans 1–73 (MAKKDDIIEF…TKGRITYRGK (73 aa)).

It belongs to the IF-1 family. In terms of assembly, component of the 30S ribosomal translation pre-initiation complex which assembles on the 30S ribosome in the order IF-2 and IF-3, IF-1 and N-formylmethionyl-tRNA(fMet); mRNA recruitment can occur at any time during PIC assembly.

It is found in the cytoplasm. In terms of biological role, one of the essential components for the initiation of protein synthesis. Stabilizes the binding of IF-2 and IF-3 on the 30S subunit to which N-formylmethionyl-tRNA(fMet) subsequently binds. Helps modulate mRNA selection, yielding the 30S pre-initiation complex (PIC). Upon addition of the 50S ribosomal subunit IF-1, IF-2 and IF-3 are released leaving the mature 70S translation initiation complex. The polypeptide is Translation initiation factor IF-1 (Psychrobacter sp. (strain PRwf-1)).